Consider the following 274-residue polypeptide: NH(3)-dependent NAD(+) synthetase (274 aa).

G46–S53 contributes to the ATP binding site. D52 serves as a coordination point for Mg(2+). Position 140 (R140) interacts with deamido-NAD(+). T160 provides a ligand contact to ATP. E165 serves as a coordination point for Mg(2+). Residues K173 and D180 each contribute to the deamido-NAD(+) site. Positions 189 and 211 each coordinate ATP. Deamido-NAD(+) is bound at residue H260–K261.

This sequence belongs to the NAD synthetase family. Homodimer.

It catalyses the reaction deamido-NAD(+) + NH4(+) + ATP = AMP + diphosphate + NAD(+) + H(+). It participates in cofactor biosynthesis; NAD(+) biosynthesis; NAD(+) from deamido-NAD(+) (ammonia route): step 1/1. Functionally, catalyzes the ATP-dependent amidation of deamido-NAD to form NAD. Uses ammonia as a nitrogen source. The chain is NH(3)-dependent NAD(+) synthetase from Lactococcus lactis subsp. lactis (strain IL1403) (Streptococcus lactis).